A 257-amino-acid chain; its full sequence is Thiazole synthase (257 aa).

K98 serves as the catalytic Schiff-base intermediate with DXP. Residues G159, 185–186 (AG), and 207–208 (NT) each bind 1-deoxy-D-xylulose 5-phosphate.

Belongs to the ThiG family. As to quaternary structure, homotetramer. Forms heterodimers with either ThiH or ThiS.

Its subcellular location is the cytoplasm. It carries out the reaction [ThiS sulfur-carrier protein]-C-terminal-Gly-aminoethanethioate + 2-iminoacetate + 1-deoxy-D-xylulose 5-phosphate = [ThiS sulfur-carrier protein]-C-terminal Gly-Gly + 2-[(2R,5Z)-2-carboxy-4-methylthiazol-5(2H)-ylidene]ethyl phosphate + 2 H2O + H(+). It functions in the pathway cofactor biosynthesis; thiamine diphosphate biosynthesis. Functionally, catalyzes the rearrangement of 1-deoxy-D-xylulose 5-phosphate (DXP) to produce the thiazole phosphate moiety of thiamine. Sulfur is provided by the thiocarboxylate moiety of the carrier protein ThiS. In vitro, sulfur can be provided by H(2)S. The protein is Thiazole synthase of Anaeromyxobacter sp. (strain Fw109-5).